Consider the following 260-residue polypeptide: ATP synthase subunit a (260 aa).

Transmembrane regions (helical) follow at residues 29–49 (FSFTNSSLFMLLTLSFFLLLI), 95–115 (FFPCILVTFLFLLFCNLQGMI), 124–144 (HFLITLALSFSIFIGITIVGF), 151–171 (FFSFLLPAGVPLPLAPFLVLL), 191–211 (MMAGHSLVKILSGFAWTMLCM), 213–233 (EIFYFIGALGPLFIVLALTGL), and 237–257 (VAILQAYVFTILICIYLNDAI).

Belongs to the ATPase A chain family. In terms of assembly, F-type ATPases have 2 components, CF(1) - the catalytic core - and CF(0) - the membrane proton channel. CF(1) has five subunits: alpha(3), beta(3), gamma(1), delta(1), epsilon(1). CF(0) has three main subunits: a, b and c.

The protein resides in the mitochondrion inner membrane. Mitochondrial membrane ATP synthase (F(1)F(0) ATP synthase or Complex V) produces ATP from ADP in the presence of a proton gradient across the membrane which is generated by electron transport complexes of the respiratory chain. F-type ATPases consist of two structural domains, F(1) - containing the extramembraneous catalytic core and F(0) - containing the membrane proton channel, linked together by a central stalk and a peripheral stalk. During catalysis, ATP synthesis in the catalytic domain of F(1) is coupled via a rotary mechanism of the central stalk subunits to proton translocation. Key component of the proton channel; it may play a direct role in the translocation of protons across the membrane. This is ATP synthase subunit a (ATP6) from Brassica napus (Rape).